The primary structure comprises 122 residues: MELKVSLNPIHIKELEQNYINSNMPDVGVGDTVKIGVLITEGNKERVQFSEGVVISKNNNGLNTTVTVRRVLQGIGVERIYLVNSPKLKSFEILRRSKIRRSKLYYLRSRVGKATRLQQRFN.

Belongs to the bacterial ribosomal protein bL19 family.

It is found in the plastid. The protein localises to the chloroplast. The protein is Large ribosomal subunit protein bL19c (rpl19) of Rhodomonas salina (Cryptomonas salina).